Here is a 283-residue protein sequence, read N- to C-terminus: ACT domain-containing protein DS12, chloroplastic (283 aa).

Residues 1-56 (MAEMAVTAALRPCSGVSPAVSGTSHRRRRPAAWRALAPPPPHAGLRLSSPAVRVPR) constitute a chloroplast transit peptide. Residues 14 to 78 (SGVSPAVSGT…SNTDTVPTPK (65 aa)) form a disordered region. A compositionally biased stretch (low complexity) spans 48–63 (SSPAVRVPRAASSAAV). ACT domains are found at residues 91-171 (IVEI…ASSQ) and 206-276 (LLVV…LRRP).

Its subcellular location is the plastid. It localises to the chloroplast. This Oryza sativa subsp. indica (Rice) protein is ACT domain-containing protein DS12, chloroplastic.